The primary structure comprises 220 residues: Recombination protein RecR (220 aa).

The C4-type zinc-finger motif lies at 57-72 (CPICFNITDAEKCDVC). The 94-residue stretch at 80–173 (RTICVVEEPG…AISRIAYGVP (94 aa)) folds into the Toprim domain. Residues 190–220 (LTGRQTVSKPQPPQRPGDEDGADGAAVPASR) form a disordered region.

Belongs to the RecR family.

In terms of biological role, may play a role in DNA repair. It seems to be involved in an RecBC-independent recombinational process of DNA repair. It may act with RecF and RecO. This chain is Recombination protein RecR, found in Deinococcus radiodurans (strain ATCC 13939 / DSM 20539 / JCM 16871 / CCUG 27074 / LMG 4051 / NBRC 15346 / NCIMB 9279 / VKM B-1422 / R1).